A 395-amino-acid chain; its full sequence is Multidrug resistance protein MdtL (395 aa).

Helical transmembrane passes span 4 to 24 (FLLC…MYLV), 42 to 62 (IAFS…GKIA), 69 to 89 (PVAI…SRAS), 93 to 113 (LFLS…VVAF), 131 to 151 (LLNG…HLIM), 158 to 178 (SLFY…LFIL), 217 to 237 (VSVI…VMGF), 247 to 267 (ALTA…LGLF), 271 to 291 (TLML…SLAH), 295 to 315 (VTLF…GVAM), 328 to 350 (VASS…LAAI), and 355 to 377 (AMNM…IFSV).

It belongs to the major facilitator superfamily. DHA1 family. MdtL (TC 2.A.1.2.22) subfamily.

The protein resides in the cell inner membrane. The sequence is that of Multidrug resistance protein MdtL from Salmonella schwarzengrund (strain CVM19633).